Consider the following 345-residue polypeptide: Biotin synthase (345 aa).

In terms of domain architecture, Radical SAM core spans 39–266 (NEVQVSTLLS…ASHVRLSAGR (228 aa)). [4Fe-4S] cluster is bound by residues C54, C58, and C61. Positions 98, 129, 189, and 261 each coordinate [2Fe-2S] cluster.

It belongs to the radical SAM superfamily. Biotin synthase family. As to quaternary structure, homodimer. [4Fe-4S] cluster serves as cofactor. It depends on [2Fe-2S] cluster as a cofactor.

The enzyme catalyses (4R,5S)-dethiobiotin + (sulfur carrier)-SH + 2 reduced [2Fe-2S]-[ferredoxin] + 2 S-adenosyl-L-methionine = (sulfur carrier)-H + biotin + 2 5'-deoxyadenosine + 2 L-methionine + 2 oxidized [2Fe-2S]-[ferredoxin]. It functions in the pathway cofactor biosynthesis; biotin biosynthesis; biotin from 7,8-diaminononanoate: step 2/2. Catalyzes the conversion of dethiobiotin (DTB) to biotin by the insertion of a sulfur atom into dethiobiotin via a radical-based mechanism. This Idiomarina loihiensis (strain ATCC BAA-735 / DSM 15497 / L2-TR) protein is Biotin synthase.